The sequence spans 239 residues: 1-(5-phosphoribosyl)-5-[(5-phosphoribosylamino)methylideneamino] imidazole-4-carboxamide isomerase (239 aa).

The active-site Proton acceptor is the aspartate 8. The active-site Proton donor is the aspartate 129.

This sequence belongs to the HisA/HisF family.

It localises to the cytoplasm. It catalyses the reaction 1-(5-phospho-beta-D-ribosyl)-5-[(5-phospho-beta-D-ribosylamino)methylideneamino]imidazole-4-carboxamide = 5-[(5-phospho-1-deoxy-D-ribulos-1-ylimino)methylamino]-1-(5-phospho-beta-D-ribosyl)imidazole-4-carboxamide. It functions in the pathway amino-acid biosynthesis; L-histidine biosynthesis; L-histidine from 5-phospho-alpha-D-ribose 1-diphosphate: step 4/9. This Bacillus anthracis (strain A0248) protein is 1-(5-phosphoribosyl)-5-[(5-phosphoribosylamino)methylideneamino] imidazole-4-carboxamide isomerase.